The primary structure comprises 227 residues: MAGGTQGVAAIVPAAGSGQRLAAGVPKAFYQLEGQTLVERAVRGLLESGVVDTVVVAVPPDRTDEAKLILGREATIVAGGADRTESVSRALSALSAGVSPEFVLVHDAARALTPPALVVRLVDMLRAGHAAVVPVLPLTDTIKAVDANGVVLGTPERAGLRAVQTPQGFSTELLLRAYRHAGVAAFTDDASLVEHVGGQVHVVAGDPLAFKITNRLDLLLAHAVVRG.

It belongs to the IspD/TarI cytidylyltransferase family. IspD subfamily.

The enzyme catalyses 2-C-methyl-D-erythritol 4-phosphate + CTP + H(+) = 4-CDP-2-C-methyl-D-erythritol + diphosphate. It participates in isoprenoid biosynthesis; isopentenyl diphosphate biosynthesis via DXP pathway; isopentenyl diphosphate from 1-deoxy-D-xylulose 5-phosphate: step 2/6. Catalyzes the formation of 4-diphosphocytidyl-2-C-methyl-D-erythritol from CTP and 2-C-methyl-D-erythritol 4-phosphate (MEP). This is 2-C-methyl-D-erythritol 4-phosphate cytidylyltransferase from Mycobacterium marinum (strain ATCC BAA-535 / M).